The following is a 77-amino-acid chain: Defensin-like protein 159 (77 aa).

The N-terminal stretch at 1–27 (MAKLSCSYFLVLILVFSAFLMVERAEG) is a signal peptide. Cystine bridges form between Cys-30–Cys-77, Cys-40–Cys-59, Cys-45–Cys-71, and Cys-49–Cys-73.

It belongs to the DEFL family.

Its subcellular location is the secreted. This is Defensin-like protein 159 (LCR25) from Arabidopsis thaliana (Mouse-ear cress).